The chain runs to 396 residues: DNA polymerase IV (396 aa).

The region spanning 6–186 (IIHVDMDAFY…LPISRLWGVG (181 aa)) is the UmuC domain. 2 residues coordinate Mg(2+): aspartate 10 and aspartate 104. Glutamate 105 is a catalytic residue.

This sequence belongs to the DNA polymerase type-Y family. Monomer. It depends on Mg(2+) as a cofactor.

It is found in the cytoplasm. The enzyme catalyses DNA(n) + a 2'-deoxyribonucleoside 5'-triphosphate = DNA(n+1) + diphosphate. In terms of biological role, poorly processive, error-prone DNA polymerase involved in untargeted mutagenesis. Copies undamaged DNA at stalled replication forks, which arise in vivo from mismatched or misaligned primer ends. These misaligned primers can be extended by PolIV. Exhibits no 3'-5' exonuclease (proofreading) activity. May be involved in translesional synthesis, in conjunction with the beta clamp from PolIII. The polypeptide is DNA polymerase IV (Desulfatibacillum aliphaticivorans).